Here is a 271-residue protein sequence, read N- to C-terminus: Small ribosomal subunit protein uS3 (271 aa).

In terms of domain architecture, KH type-2 spans 40-108; the sequence is IRKFLKKRLY…TIIVNIVEVR (69 aa). The tract at residues 210–271 is disordered; the sequence is PTRDGVNPRE…RPQRTENKGN (62 aa). A compositionally biased stretch (basic and acidic residues) spans 215-247; it reads VNPREESRKSDRRDNKRDNRRNDRRGNDRRGND.

Belongs to the universal ribosomal protein uS3 family. Part of the 30S ribosomal subunit. Forms a tight complex with proteins S10 and S14.

Its function is as follows. Binds the lower part of the 30S subunit head. Binds mRNA in the 70S ribosome, positioning it for translation. The polypeptide is Small ribosomal subunit protein uS3 (Clostridioides difficile (strain 630) (Peptoclostridium difficile)).